Here is a 353-residue protein sequence, read N- to C-terminus: Phosphate acyltransferase (353 aa).

It belongs to the PlsX family. As to quaternary structure, homodimer. Probably interacts with PlsY.

It localises to the cytoplasm. The enzyme catalyses a fatty acyl-[ACP] + phosphate = an acyl phosphate + holo-[ACP]. It functions in the pathway lipid metabolism; phospholipid metabolism. Catalyzes the reversible formation of acyl-phosphate (acyl-PO(4)) from acyl-[acyl-carrier-protein] (acyl-ACP). This enzyme utilizes acyl-ACP as fatty acyl donor, but not acyl-CoA. This is Phosphate acyltransferase from Ralstonia pickettii (strain 12J).